Here is a 328-residue protein sequence, read N- to C-terminus: Stress response kinase A (328 aa).

D201 (proton acceptor) is an active-site residue. Mg(2+) contacts are provided by N206 and D217. D217 is a catalytic residue.

This sequence belongs to the SrkA/RdoA protein kinase family. In terms of assembly, monomer. Mg(2+) is required as a cofactor.

The protein resides in the cytoplasm. The enzyme catalyses L-seryl-[protein] + ATP = O-phospho-L-seryl-[protein] + ADP + H(+). It catalyses the reaction L-threonyl-[protein] + ATP = O-phospho-L-threonyl-[protein] + ADP + H(+). A protein kinase that phosphorylates Ser and Thr residues. Probably acts to suppress the effects of stress linked to accumulation of reactive oxygen species. Probably involved in the extracytoplasmic stress response. This is Stress response kinase A from Salmonella paratyphi A (strain ATCC 9150 / SARB42).